A 108-amino-acid chain; its full sequence is Translation initiation factor 1A (108 aa).

One can recognise an S1-like domain in the interval 11-85; sequence SVKEVPKPAE…NKCDIIYKYS (75 aa).

The protein belongs to the eIF-1A family.

Its function is as follows. Seems to be required for maximal rate of protein biosynthesis. Enhances ribosome dissociation into subunits and stabilizes the binding of the initiator Met-tRNA(I) to 40 S ribosomal subunits. The chain is Translation initiation factor 1A (eIF1A) from Sulfurisphaera tokodaii (strain DSM 16993 / JCM 10545 / NBRC 100140 / 7) (Sulfolobus tokodaii).